A 109-amino-acid chain; its full sequence is Large ribosomal subunit protein P1 (109 aa).

Residues 71-109 (APAAASSAPAKKEEPKKEEPKKEEPKEEETDMDMGDLFG) are disordered. Positions 80-95 (AKKEEPKKEEPKKEEP) are enriched in basic and acidic residues. Tandem repeats lie at residues 81 to 85 (KKEEP), 86 to 90 (KKEEP), and 91 to 95 (KKEEP). Residues 81 to 95 (KKEEPKKEEPKKEEP) form a 3 X 5 AA tandem repeats of K-K-E-E-P region. Acidic residues predominate over residues 96–109 (KEEETDMDMGDLFG).

This sequence belongs to the eukaryotic ribosomal protein P1/P2 family. In terms of processing, not phosphorylated.

This Tetrahymena thermophila protein is Large ribosomal subunit protein P1 (RPLP1).